The primary structure comprises 187 residues: Elongation factor P (187 aa).

The protein belongs to the elongation factor P family.

The protein localises to the cytoplasm. Its pathway is protein biosynthesis; polypeptide chain elongation. Its function is as follows. Involved in peptide bond synthesis. Stimulates efficient translation and peptide-bond synthesis on native or reconstituted 70S ribosomes in vitro. Probably functions indirectly by altering the affinity of the ribosome for aminoacyl-tRNA, thus increasing their reactivity as acceptors for peptidyl transferase. In Corynebacterium aurimucosum (strain ATCC 700975 / DSM 44827 / CIP 107346 / CN-1) (Corynebacterium nigricans), this protein is Elongation factor P.